A 114-amino-acid chain; its full sequence is Eukaryotic translation initiation factor 6 (114 aa).

It belongs to the eIF-6 family. In terms of assembly, monomer. Associates with the 60S ribosomal subunit.

Its subcellular location is the cytoplasm. The protein resides in the nucleus. The protein localises to the nucleolus. Binds to the 60S ribosomal subunit and prevents its association with the 40S ribosomal subunit to form the 80S initiation complex in the cytoplasm. May also be involved in ribosome biogenesis. In Trypanosoma cruzi, this protein is Eukaryotic translation initiation factor 6.